Here is a 571-residue protein sequence, read N- to C-terminus: Phosphoribosylaminoimidazole carboxylase (571 aa).

Ser-37 bears the Phosphoserine mark. The ATP-grasp domain occupies 110–298 (KEHLIKNGIA…QFEAHLRSIL (189 aa)). 138–193 (GRDLGFPFVLKSRTLAYDGRGNFVVKNKEMIPEALEVLKDRPLYAEKWAPFTKELA) is a binding site for ATP.

The protein in the C-terminal section; belongs to the AIR carboxylase family. Class I subfamily.

It carries out the reaction 5-amino-1-(5-phospho-D-ribosyl)imidazole-4-carboxylate + H(+) = 5-amino-1-(5-phospho-beta-D-ribosyl)imidazole + CO2. It participates in purine metabolism; IMP biosynthesis via de novo pathway; 5-amino-1-(5-phospho-D-ribosyl)imidazole-4-carboxylate from 5-amino-1-(5-phospho-D-ribosyl)imidazole (carboxylase route): step 1/1. The sequence is that of Phosphoribosylaminoimidazole carboxylase (ADE2) from Saccharomyces cerevisiae (strain ATCC 204508 / S288c) (Baker's yeast).